The chain runs to 337 residues: 2-oxoglutarate-Fe(II) type oxidoreductase (337 aa).

One can recognise a Fe2OG dioxygenase domain in the interval 179–282 (AIATLRYLHY…RYSIPFFFTG (104 aa)). Fe cation contacts are provided by H205, D207, and H263. Residue R273 coordinates 2-oxoglutarate.

This sequence belongs to the iron/ascorbate-dependent oxidoreductase family. Requires Fe(2+) as cofactor. Endocrocin is specifically produced in conidia.

It participates in secondary metabolite biosynthesis. In terms of biological role, 2-oxoglutarate-Fe(II) type oxidoreductase; part of the gene cluster that mediates the biosynthesis of endocrocin, a simple anthraquinone interesting for many biotechnological applications. The pathway begins with the synthesis of atrochrysone thioester by the polyketide synthase (PKS) encA. The atrochrysone carboxyl ACP thioesterase encB then breaks the thioester bond and releases the atrochrysone carboxylic acid from encA. The atrochrysone carboxylic acid is then converted to endocrocin anthrone which is further oxidized into endocrocin by encC. The exact function of encD has not been identified yet, but it negatively regulates endocrocin production, likely through the modification of endocrocin itself. This Aspergillus fumigatus (strain ATCC MYA-4609 / CBS 101355 / FGSC A1100 / Af293) (Neosartorya fumigata) protein is 2-oxoglutarate-Fe(II) type oxidoreductase.